Reading from the N-terminus, the 506-residue chain is Histidine ammonia-lyase (506 aa).

The 5-imidazolinone (Ala-Gly) cross-link spans 143–145; the sequence is ASG. The residue at position 144 (Ser144) is a 2,3-didehydroalanine (Ser).

Belongs to the PAL/histidase family. Contains an active site 4-methylidene-imidazol-5-one (MIO), which is formed autocatalytically by cyclization and dehydration of residues Ala-Ser-Gly.

Its subcellular location is the cytoplasm. The catalysed reaction is L-histidine = trans-urocanate + NH4(+). The protein operates within amino-acid degradation; L-histidine degradation into L-glutamate; N-formimidoyl-L-glutamate from L-histidine: step 1/3. This is Histidine ammonia-lyase from Salmonella schwarzengrund (strain CVM19633).